A 375-amino-acid chain; its full sequence is Platelet-derived growth factor receptor-like protein (375 aa).

A signal peptide spans 1–21 (MKIWLLLGLLLMHEALEDVTG). The interval 20 to 64 (TGQHPPKNKRPKEPGENRIKPTNKKVKPKIPKIKDRDSADPTPKT) is disordered. The span at 40–50 (PTNKKVKPKIP) shows a compositional bias: basic residues. Residues 62 to 159 (PKTQSIMTQM…GYVCRRDEAK (98 aa)) form the Ig-like C2-type 1 domain. A disulfide bond links C96 and C143. N-linked (GlcNAc...) asparagine glycans are attached at residues N132 and N219. In terms of domain architecture, Ig-like C2-type 2 spans 272–373 (PSTTILASSN…GQTTVATTVE (102 aa)). A disulfide bond links C293 and C357.

Forms a complex composed of PDGFRL, TNK2 and GRB2.

It is found in the secreted. In Bos taurus (Bovine), this protein is Platelet-derived growth factor receptor-like protein (PDGFRL).